Reading from the N-terminus, the 238-residue chain is uncharacterized protein (238 aa).

A disordered region spans residues 1–20; it reads MPNLHSLPLGTRPENAIRNN.

The protein belongs to the PEP2 family.

This is an uncharacterized protein from Emericella nidulans (strain FGSC A4 / ATCC 38163 / CBS 112.46 / NRRL 194 / M139) (Aspergillus nidulans).